Reading from the N-terminus, the 314-residue chain is Coiled-coil domain-containing protein 42 like-2 (314 aa).

Coiled coils occupy residues 34 to 139 (RLLE…RQEK) and 175 to 233 (NKLL…WESR).

This sequence belongs to the CFAP73 family.

The sequence is that of Coiled-coil domain-containing protein 42 like-2 from Xenopus laevis (African clawed frog).